The chain runs to 735 residues: Polycomb protein sop-2 (735 aa).

Positions M1–A15 are enriched in polar residues. Disordered stretches follow at residues M1 to S59, A223 to A288, and P300 to Q534. An RNA-binding region spans residues A224 to S503. Low complexity predominate over residues Y239 to A288. Basic and acidic residues-rich tracts occupy residues D317–R355 and R389–D398. Positions S399–N413 are enriched in acidic residues. The span at V450–A470 shows a compositional bias: basic and acidic residues. Low complexity predominate over residues A471 to S504. Residues L520–Q534 show a composition bias toward polar residues. Residues L621–R712 are SAM-like.

As to quaternary structure, homodimer. Interacts with ubc-9. Binds through its N-terminal region to the N-terminal region of sor-1. In terms of processing, sumoylated by ubc-9. Sumoylation is required for the transcriptional regulation of homeotic genes. Widely expressed. Weakly expressed in most somatic cells of 50-cell stage embryos. At 200 cell stage, it is strongly expressed. By comma stage, it is expressed in most somatic cells.

Its subcellular location is the nucleus. Polycomb group (PcG) protein. PcG proteins act by forming multiprotein complexes, which are required to maintain the transcriptionally repressive state of homeotic genes throughout development. PcG proteins are not required to initiate repression, but to maintain it during later stages of development. Also required to repress expression of other genes and for localization of sor-1. Binds RNA. This Caenorhabditis elegans protein is Polycomb protein sop-2 (sop-2).